The following is a 471-amino-acid chain: Heat shock 70 kDa protein 13 (471 aa).

A signal peptide spans 1 to 22 (MAREMTILGSAVLTLLLAGYLA). A disordered region spans residues 314-352 (EEQDRKEPHSSDTELPKDKLSSADDHRVNSGFGRGLSDK). Residues 315 to 341 (EQDRKEPHSSDTELPKDKLSSADDHRV) show a composition bias toward basic and acidic residues.

The protein belongs to the heat shock protein 70 family. Binds UBQLN2.

The protein localises to the microsome. Its subcellular location is the endoplasmic reticulum. Its function is as follows. Has peptide-independent ATPase activity. The chain is Heat shock 70 kDa protein 13 (HSPA13) from Pongo abelii (Sumatran orangutan).